Consider the following 239-residue polypeptide: 1-(5-phosphoribosyl)-5-[(5-phosphoribosylamino)methylideneamino] imidazole-4-carboxamide isomerase (239 aa).

The Proton acceptor role is filled by aspartate 8. Aspartate 129 (proton donor) is an active-site residue.

This sequence belongs to the HisA/HisF family.

Its subcellular location is the cytoplasm. The catalysed reaction is 1-(5-phospho-beta-D-ribosyl)-5-[(5-phospho-beta-D-ribosylamino)methylideneamino]imidazole-4-carboxamide = 5-[(5-phospho-1-deoxy-D-ribulos-1-ylimino)methylamino]-1-(5-phospho-beta-D-ribosyl)imidazole-4-carboxamide. It participates in amino-acid biosynthesis; L-histidine biosynthesis; L-histidine from 5-phospho-alpha-D-ribose 1-diphosphate: step 4/9. The chain is 1-(5-phosphoribosyl)-5-[(5-phosphoribosylamino)methylideneamino] imidazole-4-carboxamide isomerase from Cereibacter sphaeroides (strain ATCC 17029 / ATH 2.4.9) (Rhodobacter sphaeroides).